The following is a 126-amino-acid chain: Probable S-adenosyl-L-methionine-binding protein MJ1583 (126 aa).

One can recognise a TsaA-like domain in the interval 4 to 126; the sequence is LKPIGVVEQN…FSEKLDCPKI (123 aa). Residues 45–46, arginine 75, and 106–109 contribute to the S-adenosyl-L-methionine site; these read HK and YNET.

The protein belongs to the tRNA methyltransferase O family.

The protein is Probable S-adenosyl-L-methionine-binding protein MJ1583 of Methanocaldococcus jannaschii (strain ATCC 43067 / DSM 2661 / JAL-1 / JCM 10045 / NBRC 100440) (Methanococcus jannaschii).